The following is a 1017-amino-acid chain: Stereoselective keto-reductase af490 (1017 aa).

An N-terminal hotdog fold region spans residues 6 to 138 (NELSGSQVPG…GRLRMTFAGH (133 aa)). Positions 6–311 (NELSGSQVPG…MSPIAPSTEK (306 aa)) constitute a PKS/mFAS DH domain. A dehydratase (DH) region spans residues 8 to 306 (LSGSQVPGAT…LEGLTMSPIA (299 aa)). Residues 153 to 311 (LRPVSISPFY…MSPIAPSTEK (159 aa)) form a C-terminal hotdog fold region. The interval 532 to 720 (QIRFLRAPFD…VQGGRLLIPR (189 aa)) is ketoreductase (KR).

The enzyme catalyses fumagillol + NADP(+) = 5-dehydrofumagillol + NADPH + H(+). It functions in the pathway secondary metabolite biosynthesis; terpenoid biosynthesis. Stereoselective keto-reductase; part of the gene cluster that mediates the biosynthesis of fumagillin, a meroterpenoid that has numerous biological activities including irreversible inhibition of human type 2 methionine aminopeptidase (METAP2). Within the pathway, the keto-reductase af490 acts as a 5-dehydrofumagillol 5-reductase that stereoselectively reduces 5-keto-fumagillol to 5R-hydroxy-seco-sesquiterpene. The pathway begins with the conversion of farnesyl pyrophosphate (FPP) to beta-trans-bergamotene by the membrane-bound beta-trans-bergamotene synthase af520. The multifunctional cytochrome P450 monooxygenase af510 then converts beta-trans-bergamotene into 5-keto-demethoxyfumagillol via several oxydation steps. 5-keto-demethoxyfumagillol is then subjected to successive C-6 hydroxylation and O-methylation by the dioxygenase af480 and O-methyltransferase af390-400, respectively, to yield 5-keto-fumagillol, which is then stereoselectively reduced by the keto-reductase af490 to 5R-hydroxy-seco-sesquiterpene. The next step is the polyketide transferase af380-catalyzed transfer of a dodecapentaenoyl group synthesized by the polyketide synthase af370 onto 5R-hydroxy-seco-sesquiterpene which leads to the production of prefumagillin. Finally, oxidative cleavage by the monooxygenase af470 converts prefumagillin to fumagillin. The protein is Stereoselective keto-reductase af490 of Aspergillus fumigatus (strain ATCC MYA-4609 / CBS 101355 / FGSC A1100 / Af293) (Neosartorya fumigata).